The primary structure comprises 155 residues: 3-hydroxyacyl-[acyl-carrier-protein] dehydratase FabZ (155 aa).

His-57 is a catalytic residue.

This sequence belongs to the thioester dehydratase family. FabZ subfamily.

The protein localises to the cytoplasm. It carries out the reaction a (3R)-hydroxyacyl-[ACP] = a (2E)-enoyl-[ACP] + H2O. Functionally, involved in unsaturated fatty acids biosynthesis. Catalyzes the dehydration of short chain beta-hydroxyacyl-ACPs and long chain saturated and unsaturated beta-hydroxyacyl-ACPs. In Sorangium cellulosum (strain So ce56) (Polyangium cellulosum (strain So ce56)), this protein is 3-hydroxyacyl-[acyl-carrier-protein] dehydratase FabZ.